The sequence spans 360 residues: Ankyrin repeat domain-containing protein 2 (360 aa).

The tract at residues 5–120 (PSWAGVGALA…GIQNLIELRK (116 aa)) is may mediate interaction with PML, p53/TP53 and YBX1. Ser99 is modified (phosphoserine; by PKB/AKT2). The disordered stretch occupies residues 126-147 (KRDALAASHEPPPEPEEITGPV). Residues 138–147 (PEPEEITGPV) show a composition bias toward acidic residues. ANK repeat units follow at residues 147–176 (VDEETFLKAAVEGKMKVIEKFLADGGSADT), 180–209 (FRRTALHRASLEGHMEILEKLLDNGATVDF), 213–242 (LDCTAMHWACRGGHLEVVKLLQSHGADTNV), 246–275 (LLSTPLHVAVRTGQVEIVEHFLSLGLEINA), and 279–308 (EGDTALHDAVRLNRYKIIKLLLLHGADMMT). Over residues 330–342 (ALEHPEPGAEHNG) the composition is skewed to basic and acidic residues. Residues 330–360 (ALEHPEPGAEHNGLEGPNDSGRETPQPVPAQ) form a disordered region.

In terms of assembly, interacts with ID3; both proteins cooperate in myoblast differentiation. Interacts with TTN/titin. Interacts (via ANK repeats) with TCAP; the interaction is direct. Interacts with TJP1 (via PDZ domains). Interacts with PML; the interaction is direct. Interacts with p53/TP53. Interacts with YBX1. Interacts with AKT2. In terms of processing, phosphorylation at Ser-99 by PKB/AKT2 in response to oxidative stress induces translocation to the nucleus and negatively regulates myoblast differentiation. As to expression, mostly expressed in skeletal and cardiac muscles. Found in slow fibers. Also expressed in kidney, but to a lower extent (at protein level).

The protein localises to the cytoplasm. It localises to the myofibril. Its subcellular location is the sarcomere. The protein resides in the i band. It is found in the cytosol. The protein localises to the nucleus. It localises to the PML body. In terms of biological role, functions as a negative regulator of myocyte differentiation. May interact with both sarcoplasmic structural proteins and nuclear proteins to regulate gene expression during muscle development and in response to muscle stress. This chain is Ankyrin repeat domain-containing protein 2 (ANKRD2), found in Homo sapiens (Human).